Consider the following 257-residue polypeptide: UPF0246 protein YaaA (257 aa).

Belongs to the UPF0246 family.

This chain is UPF0246 protein YaaA, found in Salmonella schwarzengrund (strain CVM19633).